Here is a 913-residue protein sequence, read N- to C-terminus: Polyribonucleotide nucleotidyltransferase (913 aa).

The disordered stretch occupies residues 407–427 (YMHNYEMPPYSTGETGRVGSP). Residues Asp521 and Asp527 each contribute to the Mg(2+) site. Residues 587–646 (PRIITTSVPVEKIGEVIGPKGKMINQIQEDTGAEIAIEDDGTVFISSEGGEAAEKAKAII) enclose the KH domain. Residues 658-730 (GETYNGKVVK…DRGKISLAIP (73 aa)) enclose the S1 motif domain. A disordered region spans residues 727 to 913 (LAIPGFEDQE…VRRDFDPFED (187 aa)). 3 stretches are compositionally biased toward basic and acidic residues: residues 742–789 (SRGD…RRSD), 797–865 (DRPR…DRRG), and 872–898 (RGSD…ERTE).

Belongs to the polyribonucleotide nucleotidyltransferase family. Mg(2+) is required as a cofactor.

It localises to the cytoplasm. It carries out the reaction RNA(n+1) + phosphate = RNA(n) + a ribonucleoside 5'-diphosphate. In terms of biological role, involved in mRNA degradation. Catalyzes the phosphorolysis of single-stranded polyribonucleotides processively in the 3'- to 5'-direction. This is Polyribonucleotide nucleotidyltransferase from Bifidobacterium longum (strain DJO10A).